Here is a 133-residue protein sequence, read N- to C-terminus: Small ribosomal subunit protein uS8 (133 aa).

This sequence belongs to the universal ribosomal protein uS8 family. As to quaternary structure, part of the 30S ribosomal subunit. Contacts proteins S5 and S12.

In terms of biological role, one of the primary rRNA binding proteins, it binds directly to 16S rRNA central domain where it helps coordinate assembly of the platform of the 30S subunit. The chain is Small ribosomal subunit protein uS8 from Amoebophilus asiaticus (strain 5a2).